Consider the following 296-residue polypeptide: MFVTLIKPLARLHPRAWDFVQLVRLDRPIGIYLLLWPTLWSLWIAADGVPELKNLLIFVLGVILMRAAGCVINDFADRNFDGHVARTKARPLATGKISVREAWITFAVLVALSFGLVLLTNATTVWLSFGAVAVASLYPFMKRYTYYPQVVLGAAYSWGILMAFTAERGELPASAWLLFLANVLWTVAYDSYYAMTDREDDLKIGIKSTAILFGDADRLIIGSLQGLTLLLLVLAGNRFELGLCFYLGLAVAAACFVWEAWSTRDRDPQACFRAFLHNHWAGLAIFLGTVADYALR.

8 helical membrane-spanning segments follow: residues 29–49 (IGIY…ADGV), 55–75 (LLIF…INDF), 102–122 (AWIT…LTNA), 146–166 (YYPQ…AFTA), 169–189 (GELP…TVAY), 219–239 (LIIG…GNRF), 241–261 (LGLC…WEAW), and 275–295 (FLHN…DYAL).

This sequence belongs to the UbiA prenyltransferase family. Mg(2+) serves as cofactor.

It localises to the cell inner membrane. The catalysed reaction is all-trans-octaprenyl diphosphate + 4-hydroxybenzoate = 4-hydroxy-3-(all-trans-octaprenyl)benzoate + diphosphate. Its pathway is cofactor biosynthesis; ubiquinone biosynthesis. In terms of biological role, catalyzes the prenylation of para-hydroxybenzoate (PHB) with an all-trans polyprenyl group. Mediates the second step in the final reaction sequence of ubiquinone-8 (UQ-8) biosynthesis, which is the condensation of the polyisoprenoid side chain with PHB, generating the first membrane-bound Q intermediate 3-octaprenyl-4-hydroxybenzoate. This chain is 4-hydroxybenzoate octaprenyltransferase, found in Pseudomonas aeruginosa (strain LESB58).